The primary structure comprises 432 residues: Beta-fructosidase (432 aa).

Substrate-binding positions include 14-17, Gln-33, Trp-41, 74-75, Tyr-92, 137-138, 188-190, Thr-208, and Trp-260; these read WMND, FS, RD, and EIE. Asp-17 is a catalytic residue.

This sequence belongs to the glycosyl hydrolase 32 family.

The catalysed reaction is Hydrolysis of terminal non-reducing beta-D-fructofuranoside residues in beta-D-fructofuranosides.. Hydrolysis of sucrose, raffinose, inulin and levan. Specific for the fructose moiety and the beta-anomeric configuration of the glycosidic linkages of its substrates. The enzyme released fructose from sucrose and raffinose, and the fructose polymer inulin is hydrolyzed quantitatively in an exo-type fashion. In Thermotoga maritima (strain ATCC 43589 / DSM 3109 / JCM 10099 / NBRC 100826 / MSB8), this protein is Beta-fructosidase (bfrA).